Consider the following 506-residue polypeptide: Maturase K (506 aa).

Belongs to the intron maturase 2 family. MatK subfamily.

The protein resides in the plastid. The protein localises to the chloroplast. Usually encoded in the trnK tRNA gene intron. Probably assists in splicing its own and other chloroplast group II introns. The protein is Maturase K of Mimosa pudica (Sensitive plant).